A 161-amino-acid chain; its full sequence is Nucleotide-binding protein Gbem_0619 (161 aa).

This sequence belongs to the YajQ family.

Functionally, nucleotide-binding protein. The sequence is that of Nucleotide-binding protein Gbem_0619 from Citrifermentans bemidjiense (strain ATCC BAA-1014 / DSM 16622 / JCM 12645 / Bem) (Geobacter bemidjiensis).